We begin with the raw amino-acid sequence, 201 residues long: Alpha-1-acid glycoprotein 2 (201 aa).

Positions 1 to 18 (MALSWVLTVLSLLPLLEA) are cleaved as a signal peptide. Q19 carries the post-translational modification Pyrrolidone carboxylic acid. 2 disulfides stabilise this stretch: C23–C165 and C90–C183. N33 carries N-linked (GlcNAc...) (complex) asparagine glycosylation. 4 N-linked (GlcNAc...) asparagine glycosylation sites follow: N56, N72, N93, and N103.

The protein belongs to the calycin superfamily. Lipocalin family. Post-translationally, N-glycosylated. N-glycan heterogeneity at Asn-33: Hex5HexNAc4 (minor), Hex6HexNAc5 (major) and dHex1Hex6HexNAc5 (minor). As to expression, expressed by the liver and secreted in plasma.

It is found in the secreted. Functions as a transport protein in the blood stream. Binds various hydrophobic ligands in the interior of its beta-barrel domain. Also binds synthetic drugs and influences their distribution and availability. Appears to function in modulating the activity of the immune system during the acute-phase reaction. This Homo sapiens (Human) protein is Alpha-1-acid glycoprotein 2 (ORM2).